Here is a 240-residue protein sequence, read N- to C-terminus: Phosphatidylserine decarboxylase proenzyme (240 aa).

Ser-205 (schiff-base intermediate with substrate; via pyruvic acid) is an active-site residue. A Pyruvic acid (Ser); by autocatalysis modification is found at Ser-205.

Belongs to the phosphatidylserine decarboxylase family. PSD-A subfamily. As to quaternary structure, heterodimer of a large membrane-associated beta subunit and a small pyruvoyl-containing alpha subunit. It depends on pyruvate as a cofactor. In terms of processing, is synthesized initially as an inactive proenzyme. Formation of the active enzyme involves a self-maturation process in which the active site pyruvoyl group is generated from an internal serine residue via an autocatalytic post-translational modification. Two non-identical subunits are generated from the proenzyme in this reaction, and the pyruvate is formed at the N-terminus of the alpha chain, which is derived from the carboxyl end of the proenzyme. The post-translation cleavage follows an unusual pathway, termed non-hydrolytic serinolysis, in which the side chain hydroxyl group of the serine supplies its oxygen atom to form the C-terminus of the beta chain, while the remainder of the serine residue undergoes an oxidative deamination to produce ammonia and the pyruvoyl prosthetic group on the alpha chain.

It localises to the cell membrane. The catalysed reaction is a 1,2-diacyl-sn-glycero-3-phospho-L-serine + H(+) = a 1,2-diacyl-sn-glycero-3-phosphoethanolamine + CO2. The protein operates within phospholipid metabolism; phosphatidylethanolamine biosynthesis; phosphatidylethanolamine from CDP-diacylglycerol: step 2/2. Functionally, catalyzes the formation of phosphatidylethanolamine (PtdEtn) from phosphatidylserine (PtdSer). In Rhodopirellula baltica (strain DSM 10527 / NCIMB 13988 / SH1), this protein is Phosphatidylserine decarboxylase proenzyme.